Consider the following 415-residue polypeptide: E3 ubiquitin-protein ligase RNF135 (415 aa).

The RING-type zinc-finger motif lies at 21-67; that stretch reads CIICQGLLDWPTTLPCGHSFCLQCLKDLWVSKRAGVDSCPWACPICR. Positions 181–206 form a coiled coil; that stretch reads TFSASQKKIQEILRDLEKIQETLQGS. One can recognise a B30.2/SPRY domain in the interval 228–415; that stretch reads PDQRYPVSRK…LTPGNYLEIL (188 aa).

In terms of assembly, homodimer. Interacts (homodimer) with RIGI (double-stranded RNA-bound oligomeric form); involved in both RIGI ubiquitination, oligomerization into filaments associated with viral RNAs and the bridging of these filaments. Interacts with UBE2D3 and UBE2N; E2 ubiquitin ligases involved in RNF135-mediated ubiquitination of RIGI and activation of the RIG-I signaling pathway. Interacts with PCBP2.

It localises to the cytoplasm. Its subcellular location is the stress granule. The catalysed reaction is S-ubiquitinyl-[E2 ubiquitin-conjugating enzyme]-L-cysteine + [acceptor protein]-L-lysine = [E2 ubiquitin-conjugating enzyme]-L-cysteine + N(6)-ubiquitinyl-[acceptor protein]-L-lysine.. Its pathway is protein modification; protein ubiquitination. Its function is as follows. E2-dependent E3 ubiquitin-protein ligase that functions as a RIGI coreceptor in the sensing of viral RNAs in cell cytoplasm and the activation of the antiviral innate immune response. Together with the UBE2D3, UBE2N and UB2V1 E2 ligases, catalyzes the 'Lys-63'-linked polyubiquitination of RIGI oligomerized on viral RNAs, an essential step in the activation of the RIG-I signaling pathway. Through a ubiquitin-independent parallel mechanism, which consists in bridging RIGI filaments forming on longer viral RNAs, further activates the RIG-I signaling pathway. This second mechanism that synergizes with the ubiquitin-dependent one would thereby allow an RNA length-dependent regulation of the RIG-I signaling pathway. Associated with the E2 ligase UBE2N, also constitutively synthesizes unanchored 'Lys-63'-linked polyubiquitin chains that may also activate the RIG-I signaling pathway. This chain is E3 ubiquitin-protein ligase RNF135, found in Rattus norvegicus (Rat).